An 88-amino-acid polypeptide reads, in one-letter code: Sec-independent protein translocase protein TatA (88 aa).

A helical membrane pass occupies residues 1 to 21; that stretch reads MGGISIWQLLIIALIVVLLFG. The disordered stretch occupies residues 43–88; sequence MSSEEDKKALEDAEAAKPVQTAQTVQSAQPTQQATEKKPESNKEQA. Residues 46 to 57 show a composition bias toward basic and acidic residues; that stretch reads EEDKKALEDAEA. Over residues 62–76 the composition is skewed to polar residues; that stretch reads QTAQTVQSAQPTQQA. The span at 77-88 shows a compositional bias: basic and acidic residues; it reads TEKKPESNKEQA.

This sequence belongs to the TatA/E family. In terms of assembly, the Tat system comprises two distinct complexes: a TatABC complex, containing multiple copies of TatA, TatB and TatC subunits, and a separate TatA complex, containing only TatA subunits. Substrates initially bind to the TatABC complex, which probably triggers association of the separate TatA complex to form the active translocon.

The protein resides in the cell inner membrane. Its function is as follows. Part of the twin-arginine translocation (Tat) system that transports large folded proteins containing a characteristic twin-arginine motif in their signal peptide across membranes. TatA could form the protein-conducting channel of the Tat system. This chain is Sec-independent protein translocase protein TatA, found in Shewanella oneidensis (strain ATCC 700550 / JCM 31522 / CIP 106686 / LMG 19005 / NCIMB 14063 / MR-1).